Reading from the N-terminus, the 553-residue chain is Chaperonin GroEL 1 (553 aa).

Residues 29-32, 86-90, Gly413, 476-478, and Asp492 contribute to the ATP site; these read TIGP, DGTTT, and NAL. The tract at residues 520–543 is disordered; sequence DKPEPPAPAGGGGDPMGGMGGMDP. Gly residues predominate over residues 528–543; that stretch reads AGGGGDPMGGMGGMDP.

The protein belongs to the chaperonin (HSP60) family. In terms of assembly, forms a cylinder of 14 subunits composed of two heptameric rings stacked back-to-back. Interacts with the co-chaperonin GroES.

It localises to the cytoplasm. It catalyses the reaction ATP + H2O + a folded polypeptide = ADP + phosphate + an unfolded polypeptide.. Its function is as follows. Together with its co-chaperonin GroES, plays an essential role in assisting protein folding. The GroEL-GroES system forms a nano-cage that allows encapsulation of the non-native substrate proteins and provides a physical environment optimized to promote and accelerate protein folding. The sequence is that of Chaperonin GroEL 1 from Synechococcus sp. (strain CC9311).